The chain runs to 129 residues: Iron-sulfur cluster assembly 1 homolog, mitochondrial (129 aa).

Residues 1-12 (MSASLVRATVRA) constitute a mitochondrion transit peptide. Fe cation is bound by residues Cys-57, Cys-121, and Cys-123.

Belongs to the HesB/IscA family. As to quaternary structure, interacts with CRY2, but not with CRY1 (in vitro).

It localises to the mitochondrion. In terms of biological role, involved in the maturation of mitochondrial 4Fe-4S proteins functioning late in the iron-sulfur cluster assembly pathway. Probably involved in the binding of an intermediate of Fe/S cluster assembly. The polypeptide is Iron-sulfur cluster assembly 1 homolog, mitochondrial (Isca1) (Mus musculus (Mouse)).